Here is a 209-residue protein sequence, read N- to C-terminus: uncharacterized protein (209 aa).

The segment at 177 to 209 (DNSDNSSDSDDSDSLDGSDDLNDSDNVDNLFVG) is disordered. A compositionally biased stretch (acidic residues) spans 183–202 (SDSDDSDSLDGSDDLNDSDN).

This is an uncharacterized protein from Acanthamoeba polyphaga (Amoeba).